Consider the following 749-residue polypeptide: Protein SEY1 homolog 2 (749 aa).

The Cytoplasmic portion of the chain corresponds to 1-671 (MIKNYGDRYH…QKHKQDFLQN (671 aa)). The region spanning 40 to 265 (GKNYNIVSII…YEKNVRWSDM (226 aa)) is the GB1/RHD3-type G domain. 50-57 (GSQSTGKS) lines the GTP pocket. Residues 445-465 (NQLKAFVEAQLATFKQQLDNI) adopt a coiled-coil conformation. A helical transmembrane segment spans residues 672-692 (IPKPFWFLLLFFMYDDVLRWM). The Lumenal portion of the chain corresponds to 693 to 695 (GNP). Residues 696-716 (LFLYPILIILCFVGFCIAIGL) traverse the membrane as a helical segment. Over 717 to 749 (HSLPKLAFQWVFRTLNQAVIPIIFGGISKLKGS) the chain is Cytoplasmic.

The protein belongs to the TRAFAC class dynamin-like GTPase superfamily. GB1/RHD3 GTPase family. RHD3 subfamily.

The protein localises to the endoplasmic reticulum membrane. Functionally, probable GTP-binding protein that may be involved in cell development. This is Protein SEY1 homolog 2 from Paramecium tetraurelia.